The sequence spans 546 residues: Metal transporter Nramp6.2 (546 aa).

A run of 8 helical transmembrane segments spans residues 50-70 (FLPY…PGNL), 83-103 (ELLW…SLAA), 128-150 (SLWL…GTAF), 154-176 (ILFH…LLLG), 187-207 (LLIS…LSYV), 233-253 (IALL…ALVL), 270-290 (YFLI…VSII), and 333-353 (IYAI…TYAG). Residue asparagine 371 is glycosylated (N-linked (GlcNAc...) asparagine). Helical transmembrane passes span 374-394 (TRCI…SSGA), 397-417 (LIII…IPLL), 433-453 (IYII…NVYY), and 473-493 (VIIG…IIYL).

Belongs to the NRAMP (TC 2.A.55) family.

It is found in the membrane. Probable divalent metal transporter. This is Metal transporter Nramp6.2 from Populus trichocarpa (Western balsam poplar).